Reading from the N-terminus, the 817-residue chain is Transcription factor SPT20 homolog-like 2 (817 aa).

Residues Met-1–Asn-14 are compositionally biased toward basic and acidic residues. Disordered regions lie at residues Met-1–Tyr-28, Pro-249–Val-275, Pro-369–Arg-553, Pro-598–Ala-630, and Gln-675–Ser-697. Residues Ser-423 to Thr-440 are compositionally biased toward polar residues. Composition is skewed to low complexity over residues Ser-469–Ser-479, Pro-494–Pro-505, Ala-513–Pro-531, and Pro-598–Gly-618.

Belongs to the SPT20 family.

This chain is Transcription factor SPT20 homolog-like 2 (SUPT20HL2), found in Homo sapiens (Human).